Here is a 125-residue protein sequence, read N- to C-terminus: Small ribosomal subunit protein uS12 (125 aa).

Position 89 is a 3-methylthioaspartic acid (aspartate 89).

The protein belongs to the universal ribosomal protein uS12 family. Part of the 30S ribosomal subunit. Contacts proteins S8 and S17. May interact with IF1 in the 30S initiation complex.

Functionally, with S4 and S5 plays an important role in translational accuracy. Interacts with and stabilizes bases of the 16S rRNA that are involved in tRNA selection in the A site and with the mRNA backbone. Located at the interface of the 30S and 50S subunits, it traverses the body of the 30S subunit contacting proteins on the other side and probably holding the rRNA structure together. The combined cluster of proteins S8, S12 and S17 appears to hold together the shoulder and platform of the 30S subunit. In Wigglesworthia glossinidia brevipalpis, this protein is Small ribosomal subunit protein uS12.